The sequence spans 1098 residues: PAN2-PAN3 deadenylation complex catalytic subunit PAN2 (1098 aa).

4 WD repeats span residues 19–58 (ASKD…PFQL), 150–190 (TGFD…SVKS), 253–293 (PFPN…KLNV), and 300–338 (PASP…NFVN). Residues 340–466 (PAPLEEQDIP…SIFHLKSPTS (127 aa)) form a linker region. The disordered stretch occupies residues 417-442 (RNISQPYQSLREPPGSNSNAPRFISE). The USP domain occupies 466–839 (SVPHCYSRLQ…KPVIIVYSEP (374 aa)). Positions 894–1067 (IAIDAEFVVS…EDAYTALMLF (174 aa)) constitute an Exonuclease domain. Positions 897, 899, 1006, and 1059 each coordinate a divalent metal cation.

It belongs to the peptidase C19 family. PAN2 subfamily. Forms a heterotrimer with an asymmetric homodimer of the regulatory subunit PAN3 to form the poly(A)-nuclease (PAN) deadenylation complex. It depends on a divalent metal cation as a cofactor.

It is found in the cytoplasm. The catalysed reaction is Exonucleolytic cleavage of poly(A) to 5'-AMP.. Positively regulated by the regulatory subunit PAN3. In terms of biological role, catalytic subunit of the poly(A)-nuclease (PAN) deadenylation complex, one of two cytoplasmic mRNA deadenylases involved in mRNA turnover. PAN specifically shortens poly(A) tails of RNA and the activity is stimulated by poly(A)-binding protein PAB1. PAN deadenylation is followed by rapid degradation of the shortened mRNA tails by the CCR4-NOT complex. Deadenylated mRNAs are then degraded by two alternative mechanisms, namely exosome-mediated 3'-5' exonucleolytic degradation, or deadenylation-dependent mRNA decaping and subsequent 5'-3' exonucleolytic degradation by XRN1. May also be involved in post-transcriptional maturation of mRNA poly(A) tails. This is PAN2-PAN3 deadenylation complex catalytic subunit PAN2 from Meyerozyma guilliermondii (strain ATCC 6260 / CBS 566 / DSM 6381 / JCM 1539 / NBRC 10279 / NRRL Y-324) (Yeast).